The chain runs to 181 residues: Adenine phosphoribosyltransferase (181 aa).

Belongs to the purine/pyrimidine phosphoribosyltransferase family. In terms of assembly, homodimer.

It is found in the cytoplasm. The catalysed reaction is AMP + diphosphate = 5-phospho-alpha-D-ribose 1-diphosphate + adenine. Its pathway is purine metabolism; AMP biosynthesis via salvage pathway; AMP from adenine: step 1/1. Its function is as follows. Catalyzes a salvage reaction resulting in the formation of AMP, that is energically less costly than de novo synthesis. In Shewanella amazonensis (strain ATCC BAA-1098 / SB2B), this protein is Adenine phosphoribosyltransferase.